A 262-amino-acid chain; its full sequence is GTP cyclohydrolase FolE2 (262 aa).

Belongs to the GTP cyclohydrolase IV family.

It carries out the reaction GTP + H2O = 7,8-dihydroneopterin 3'-triphosphate + formate + H(+). The protein operates within cofactor biosynthesis; 7,8-dihydroneopterin triphosphate biosynthesis; 7,8-dihydroneopterin triphosphate from GTP: step 1/1. Converts GTP to 7,8-dihydroneopterin triphosphate. The polypeptide is GTP cyclohydrolase FolE2 (Dichelobacter nodosus (strain VCS1703A)).